The following is a 301-amino-acid chain: Acetyl-coenzyme A carboxylase carboxyl transferase subunit beta (301 aa).

Residues 29-298 form the CoA carboxyltransferase N-terminal domain; sequence LWVKCPETGQ…AEPAEEEAEP (270 aa).

Belongs to the AccD/PCCB family. As to quaternary structure, acetyl-CoA carboxylase is a heterohexamer composed of biotin carboxyl carrier protein (AccB), biotin carboxylase (AccC) and two subunits each of ACCase subunit alpha (AccA) and ACCase subunit beta (AccD).

It is found in the cytoplasm. The enzyme catalyses N(6)-carboxybiotinyl-L-lysyl-[protein] + acetyl-CoA = N(6)-biotinyl-L-lysyl-[protein] + malonyl-CoA. Its pathway is lipid metabolism; malonyl-CoA biosynthesis; malonyl-CoA from acetyl-CoA: step 1/1. In terms of biological role, component of the acetyl coenzyme A carboxylase (ACC) complex. Biotin carboxylase (BC) catalyzes the carboxylation of biotin on its carrier protein (BCCP) and then the CO(2) group is transferred by the transcarboxylase to acetyl-CoA to form malonyl-CoA. The sequence is that of Acetyl-coenzyme A carboxylase carboxyl transferase subunit beta from Methylobacterium nodulans (strain LMG 21967 / CNCM I-2342 / ORS 2060).